The following is a 413-amino-acid chain: Calsequestrin-2 (413 aa).

Positions 1 to 19 (MKRIYLLVVGLYLLSFSRA) are cleaved as a signal peptide. At Tyr-282 the chain carries Phosphotyrosine. Asn-335 carries an N-linked (GlcNAc...) asparagine glycan. Positions 365–413 (VLSGKINTEDDDNEDEDDDGDNDNDDDDDDDDNSDEDNDDSDDDDDDDE) are disordered. Acidic residues predominate over residues 373-413 (EDDDNEDEDDDGDNDNDDDDDDDDNSDEDNDDSDDDDDDDE). Residues Ser-398 and Ser-405 each carry the phosphoserine modification.

Belongs to the calsequestrin family. Monomer, homodimer and homooligomer. Mostly monomeric in the absence of calcium. Forms higher oligomers in a calcium-dependent manner. Dimers associate to form tetramers, that then form linear homomer chains. Interacts with ASPH and TRDN. Phosphorylation in the C-terminus, probably by CK2, moderately increases calcium buffering capacity. In terms of processing, N-glycosylated. In terms of tissue distribution, detected in stomach and vas deferens (at protein level).

It is found in the sarcoplasmic reticulum lumen. Functionally, calsequestrin is a high-capacity, moderate affinity, calcium-binding protein and thus acts as an internal calcium store in muscle. Calcium ions are bound by clusters of acidic residues at the protein surface, especially at the interface between subunits. Can bind around 60 Ca(2+) ions. Regulates the release of lumenal Ca(2+) via the calcium release channel RYR2; this plays an important role in triggering muscle contraction. Plays a role in excitation-contraction coupling in the heart and in regulating the rate of heart beats. This chain is Calsequestrin-2 (Casq2), found in Rattus norvegicus (Rat).